Reading from the N-terminus, the 189-residue chain is GMP synthase [glutamine-hydrolyzing] subunit A (189 aa).

A Glutamine amidotransferase type-1 domain is found at 1-189; that stretch reads MIVILNNGGQ…CKKCGFEFEE (189 aa). Cys76 functions as the Nucleophile in the catalytic mechanism. Catalysis depends on residues His163 and Glu165.

As to quaternary structure, heterodimer composed of a glutamine amidotransferase subunit (A) and a GMP-binding subunit (B).

It carries out the reaction XMP + L-glutamine + ATP + H2O = GMP + L-glutamate + AMP + diphosphate + 2 H(+). It participates in purine metabolism; GMP biosynthesis; GMP from XMP (L-Gln route): step 1/1. Functionally, catalyzes the synthesis of GMP from XMP. In Methanococcus maripaludis (strain C7 / ATCC BAA-1331), this protein is GMP synthase [glutamine-hydrolyzing] subunit A.